A 590-amino-acid polypeptide reads, in one-letter code: Zinc finger protein 703 (590 aa).

Over residues 1–14 (MSDSPAGSNPRTPE) the composition is skewed to polar residues. Disordered regions lie at residues 1-43 (MSDS…DPLR), 96-293 (CSQI…AGHV), and 341-366 (LVGGQLSGGLGLPPGKPPSSSPLTGA). S2 bears the N-acetylserine mark. 4 stretches are compositionally biased toward low complexity: residues 27-37 (PAVPAAVSLLP), 128-139 (RSAPGAASAAAA), 171-189 (GSSSVSSTSSSSSSSPGDK), and 207-219 (APVSASSSSSSPG). Residues 241-251 (ELDKKDQEPKP) show a composition bias toward basic and acidic residues. Residue S252 is modified to Phosphoserine. Composition is skewed to gly residues over residues 260 to 273 (RGGGGEPGAHGGAE) and 341 to 352 (LVGGQLSGGLGL). Residues 456–484 (HSCNWVAASGPCDKRFATSEELLSHLRTH) form a C2H2-type zinc finger. R580 is subject to Omega-N-methylarginine.

This sequence belongs to the Elbow/Noc family. In terms of assembly, interacts with TLE4; increases transcriptional repression. Interacts with DCAF7 and PHB2. May interact with HSPD1. As to expression, expressed in mammary epithelium.

The protein localises to the nucleus. It localises to the cytoplasm. Transcriptional corepressor which does not bind directly to DNA and may regulate transcription through recruitment of histone deacetylases to gene promoters. Regulates cell adhesion, migration and proliferation. May be required for segmental gene expression during hindbrain development. In Homo sapiens (Human), this protein is Zinc finger protein 703 (ZNF703).